Consider the following 473-residue polypeptide: MPGIVTRFAPSPTGFLHIGGARTALFNWLYAKHHGGRFLLRIEDTDRKRSTQEAIDAIIEGLRWLGMSYDGEIVYQSKRIERHKEVANLLVEKGRAYHCYCPEDEVAEKKAKAREEGKIYKHKCTTKPPSCHPSSRHWKNMWSRAGMTSGVRSVVRFKVPDSQEIVIDDKIYGQIKVNSDQLDDIVILRSDNTPTYIFAVVVDDHDAGITDIIRGSDHLTNTFKHLLIYQALDFDIPRFAHVPLIHGEDGNKLSKRHGATSVCDYEKMGILPKAMRNYLLRLGWSHGNDEIISDEQAIEWFNLESIGRSPARLDFKKLEHLNNHYISNMSNEDILTLMLRENTLTDKKKGYLLQGLTELKKRANYLTELLDLAKFYIQDPPLDLSEEAEQIVKSNLDIIKLLASFLSKIGDENWNKGFLSSQIKECAKLHDMKISDVYHSLRAPITGVMDAPGIIDIMVILGKDECIRRLQAI.

The 'HIGH' region motif lies at 10–20; it reads PSPTGFLHIGG. Residues 252–256 carry the 'KMSKS' region motif; it reads KLSKR. Lys255 contributes to the ATP binding site.

Belongs to the class-I aminoacyl-tRNA synthetase family. Glutamate--tRNA ligase type 1 subfamily. Monomer.

The protein resides in the cytoplasm. The catalysed reaction is tRNA(Glu) + L-glutamate + ATP = L-glutamyl-tRNA(Glu) + AMP + diphosphate. Functionally, catalyzes the attachment of glutamate to tRNA(Glu) in a two-step reaction: glutamate is first activated by ATP to form Glu-AMP and then transferred to the acceptor end of tRNA(Glu). The sequence is that of Glutamate--tRNA ligase 1 from Wolbachia pipientis wMel.